A 422-amino-acid chain; its full sequence is Elongation factor 1-alpha (422 aa).

The region spanning 5 to 221 (KPHMNLAVIG…DELKEPEKPS (217 aa)) is the tr-type G domain. The G1 stretch occupies residues 14–21 (GHIDHGKS). 14-21 (GHIDHGKS) contributes to the GTP binding site. Ser21 lines the Mg(2+) pocket. A G2 region spans residues 70–74 (GITID). Residues 91 to 94 (DCPG) form a G3 region. Residues 91–95 (DCPGH) and 146–149 (NKMD) contribute to the GTP site. The tract at residues 146–149 (NKMD) is G4. A G5 region spans residues 185-187 (SAF).

It belongs to the TRAFAC class translation factor GTPase superfamily. Classic translation factor GTPase family. EF-Tu/EF-1A subfamily.

It is found in the cytoplasm. It carries out the reaction GTP + H2O = GDP + phosphate + H(+). Its function is as follows. GTP hydrolase that promotes the GTP-dependent binding of aminoacyl-tRNA to the A-site of ribosomes during protein biosynthesis. This is Elongation factor 1-alpha from Methanosarcina acetivorans (strain ATCC 35395 / DSM 2834 / JCM 12185 / C2A).